A 709-amino-acid chain; its full sequence is Leucine-rich repeat-containing protein 4B (709 aa).

The first 38 residues, 1–38 (MAQAHIRGSPCPLLPPGRMSWPHGALLLLWLFSPPLRA), serve as a signal peptide directing secretion. Residues 50–88 (GGGSPPATSCPAACSCSNQASRVICTRRELAEVPASIPV) form the LRRNT domain. LRR repeat units follow at residues 89-110 (NTRYLNLQENSIQVIRTDTFKH), 113-134 (HLEILQLSKNLVRKIEVGAFNG), 137-158 (SLNTLELFDNRLTTVPTQAFEY), 161-182 (KLRELWLRNNPIESIPSYAFNR), 185-207 (SLRRLDLGELKRLEYISEAAFEG), 210-231 (NLRYLNLGMCNLKDIPNLTALV), 232-253 (RLEELELSGNRLDLIRPGSFQG), 256-277 (SLRKLWLMHAQVATIERNAFDD), and 280-301 (SLEELNLSHNNLMSLPHDLFTP). An N-linked (GlcNAc...) asparagine glycan is attached at Asn226. Asn285, Asn335, Asn376, Asn402, Asn424, Asn427, Asn446, and Asn454 each carry an N-linked (GlcNAc...) asparagine glycan. The LRRCT domain maps to 313–365 (NPWHCNCDVLWLSWWLKETVPSNTTCCARCHAPAGLKGRYIGELDQSHFTCYA). Positions 366-454 (PVIVEPPTDL…GNTTASATLN (89 aa)) constitute an Ig-like C2-type domain. Cys387 and Cys438 are oxidised to a cystine. Residues 496–552 (TQPGEEAQQPRGTEKEPPGPTTDGAWGGGRPDAAAPASASTTAPAPRSSRPTEKAFT) are disordered. Residues 528–544 (AAAPASASTTAPAPRSS) show a composition bias toward low complexity. Residues 575-595 (IIIGCFVAITFMAAVMLVAFY) form a helical membrane-spanning segment. Ser689 is modified (phosphoserine).

Interacts with PTPRF. Interacts with DLG4. In terms of processing, N-glycosylated. O-glycosylated; contains sialic acid.

It is found in the membrane. Its subcellular location is the presynaptic cell membrane. Its function is as follows. Synaptic adhesion protein. Regulates the formation of excitatory synapses. The trans-synaptic adhesion between LRRC4B and PTPRF regulates the formation of excitatory synapses in a bidirectional manner. The chain is Leucine-rich repeat-containing protein 4B (Lrrc4b) from Mus musculus (Mouse).